A 433-amino-acid chain; its full sequence is UPF0761 membrane protein Sde_0901 (433 aa).

Transmembrane regions (helical) follow at residues 46 to 66 (LFAM…FPAF), 103 to 123 (LSAA…TNIE), 142 to 162 (FLLY…GLAM), 185 to 205 (FFSY…FAAV), 217 to 237 (IGGI…GWVV), and 247 to 267 (GAFA…MIIL).

Belongs to the UPF0761 family.

It is found in the cell inner membrane. The sequence is that of UPF0761 membrane protein Sde_0901 from Saccharophagus degradans (strain 2-40 / ATCC 43961 / DSM 17024).